The primary structure comprises 342 residues: Leucine-rich repeat-containing protein 23 (342 aa).

Residues 1 to 30 (MSDEDDLEDFETDQDDLEREDDEKETEEWE) are compositionally biased toward acidic residues. The segment at 1 to 42 (MSDEDDLEDFETDQDDLEREDDEKETEEWEDYRKEGEESEDW) is disordered. Positions 3-27 (DEDDLEDFETDQDDLEREDDEKETE) form a coiled coil. LRR repeat units lie at residues 91–112 (HLRYVDVSENHLTDLSPLNHLT), 113–133 (NLLWLKADGNQLRSARLNELP), 134–154 (YLQIASFAYNQITDTEGISHP), 155–176 (RLASLDLKGNRIHMVTGLDPQK), 179–199 (SLHTLELRGNQLNSTLGINLP), 200–221 (KLKNLFLAQNMLKKVEGLENLS), 222–243 (NLTTLHLRDNQIETLSGFSKEM), and 245–266 (SLQYLNLRGNMVADLGELAKLR). The segment at 207-342 (AQNMLKKVEG…PESELDQSST (136 aa)) is interaction with RSPH9. The LRRCT domain occupies 279–317 (NPCTDENDYRQEALVQIAHLERLDKEFYEEEERAEADEI). Positions 306–332 (YEEEERAEADEIRQRMKEEQEQEAEVE) form a coiled coil. Residues 307–342 (EEEERAEADEIRQRMKEEQEQEAEVEPESELDQSST) are disordered. Residues 314 to 324 (ADEIRQRMKEE) show a composition bias toward basic and acidic residues. Positions 325–342 (QEQEAEVEPESELDQSST) are enriched in acidic residues.

In terms of assembly, component of the axonemal radial spoke complex. Interacts with RSPH3. Interacts with RSPH9.

Its subcellular location is the cytoplasm. The protein resides in the cytoskeleton. The protein localises to the flagellum axoneme. In terms of biological role, essential for sperm motility and male fertility. Plays an important role in the proper assembly of the third radial spoke (RS3) head and the bridge structure between RS2 and RS3 in the sperm flagella. The polypeptide is Leucine-rich repeat-containing protein 23 (LRRC23) (Bos taurus (Bovine)).